Consider the following 88-residue polypeptide: FXYD domain-containing ion transport regulator 3 (88 aa).

An N-terminal signal peptide occupies residues 1 to 17 (MHEVALSVLILLAGLSA). Topologically, residues 18-38 (LDANDPEDKNSPFYYDWHSLR) are extracellular. The chain crosses the membrane as a helical span at residues 39–59 (VGGLICAGTPCALGIIILLSG). Topologically, residues 60–88 (KCKCKFSQKPSHRPGDAPPLITPGSAHDC) are cytoplasmic. The segment at 66–88 (SQKPSHRPGDAPPLITPGSAHDC) is disordered.

It belongs to the FXYD family. As to quaternary structure, regulatory subunit of the sodium/potassium-transporting ATPase which is composed of a catalytic alpha subunit, a non-catalytic beta subunit and an additional regulatory subunit. Interacts with catalytic alpha subunit ATP1A1. Also interacts with non-catalytic beta subunit ATP1B1. Interacts with the alpha1-beta1, alpha2-beta1 and alpha3-beta1 NKA isozymes. In terms of processing, glutathionylated.

It localises to the cell membrane. Functionally, associates with and regulates the activity of the sodium/potassium-transporting ATPase (NKA) which transports Na(+) out of the cell and K(+) into the cell. Reduces glutathionylation of the NKA beta-1 subunit ATP1B1, thus reversing glutathionylation-mediated inhibition of ATP1B1. Induces a hyperpolarization-activated chloride current when expressed in Xenopus oocytes. This chain is FXYD domain-containing ion transport regulator 3 (FXYD3), found in Sus scrofa (Pig).